The chain runs to 491 residues: Glutamyl-tRNA(Gln) amidotransferase subunit A (491 aa).

Catalysis depends on charge relay system residues K79 and S158. The Acyl-ester intermediate role is filled by S182.

The protein belongs to the amidase family. GatA subfamily. In terms of assembly, heterotrimer of A, B and C subunits.

It catalyses the reaction L-glutamyl-tRNA(Gln) + L-glutamine + ATP + H2O = L-glutaminyl-tRNA(Gln) + L-glutamate + ADP + phosphate + H(+). Its function is as follows. Allows the formation of correctly charged Gln-tRNA(Gln) through the transamidation of misacylated Glu-tRNA(Gln) in organisms which lack glutaminyl-tRNA synthetase. The reaction takes place in the presence of glutamine and ATP through an activated gamma-phospho-Glu-tRNA(Gln). The sequence is that of Glutamyl-tRNA(Gln) amidotransferase subunit A from Maricaulis maris (strain MCS10) (Caulobacter maris).